Consider the following 78-residue polypeptide: uncharacterized protein (78 aa).

A disordered region spans residues 20–78; it reads LQDLFPPHFGNEEADEDDEDGDKYGDDDGEFYGDNDGDNDGDNDGVNDGVGDGPPSTLL. Residues 31-64 show a composition bias toward acidic residues; that stretch reads EEADEDDEDGDKYGDDDGEFYGDNDGDNDGDNDG.

This is an uncharacterized protein from Dictyostelium discoideum (Social amoeba).